A 184-amino-acid polypeptide reads, in one-letter code: Ribosome-recycling factor (184 aa).

Residues 141 to 164 (DEKNGDITEDDLRSQTEDVQKATD) are disordered.

This sequence belongs to the RRF family.

It localises to the cytoplasm. In terms of biological role, responsible for the release of ribosomes from messenger RNA at the termination of protein biosynthesis. May increase the efficiency of translation by recycling ribosomes from one round of translation to another. This Staphylococcus haemolyticus (strain JCSC1435) protein is Ribosome-recycling factor.